The sequence spans 146 residues: Prolactin-inducible protein homolog (146 aa).

The signal sequence occupies residues 1-28 (MRALQFLLRVSPAFLLLVLCLQLEINKA). Intrachain disulfides connect Cys-65/Cys-91 and Cys-89/Cys-123. N-linked (GlcNAc...) asparagine glycosylation is present at Asn-105.

Belongs to the PIP family. As to quaternary structure, monomer. Interacts with AZGP1.

The protein resides in the secreted. The chain is Prolactin-inducible protein homolog (PIP) from Oryctolagus cuniculus (Rabbit).